Consider the following 304-residue polypeptide: Recombination-associated protein RdgC (304 aa).

This sequence belongs to the RdgC family.

The protein resides in the cytoplasm. Its subcellular location is the nucleoid. Its function is as follows. May be involved in recombination. The protein is Recombination-associated protein RdgC of Shewanella baltica (strain OS195).